Consider the following 333-residue polypeptide: uncharacterized protein (333 aa).

Positions N94 to S122 form a coiled coil.

This is an uncharacterized protein from Aquifex aeolicus (strain VF5).